The following is a 197-amino-acid chain: Probable GTP-binding protein EngB (197 aa).

An EngB-type G domain is found at 22 to 197 (TGVEVAFAGR…FKEKLDTWYQ (176 aa)). GTP-binding positions include 30–37 (GRSNAGKS), 57–61 (GRTQL), 75–78 (DLPG), 142–145 (TKAD), and 177–179 (FSS). Mg(2+) contacts are provided by Ser37 and Thr59.

It belongs to the TRAFAC class TrmE-Era-EngA-EngB-Septin-like GTPase superfamily. EngB GTPase family. The cofactor is Mg(2+).

Its function is as follows. Necessary for normal cell division and for the maintenance of normal septation. This Francisella tularensis subsp. holarctica (strain FTNF002-00 / FTA) protein is Probable GTP-binding protein EngB.